A 766-amino-acid polypeptide reads, in one-letter code: Subtilisin-like protease SBT4.15 (766 aa).

Positions 1-23 are cleaved as a signal peptide; it reads MVSNQRVRLFMLCFCLVNNAVIA. Positions 24–113 are cleaved as a propeptide — activation peptide; that stretch reads ATEDENVERK…VFKNTQRQLH (90 aa). An Inhibitor I9 domain is found at 35–113; it reads YIVYMGEATE…VFKNTQRQLH (79 aa). The 485-residue stretch at 117-601 folds into the Peptidase S8 domain; the sequence is SWDFLGLVES…SGQINPRRAI (485 aa). Asp144 serves as the catalytic Charge relay system. An N-linked (GlcNAc...) asparagine glycan is attached at Asn175. The active-site Charge relay system is the His210. N-linked (GlcNAc...) asparagine glycosylation is found at Asn233, Asn376, and Asn465. In terms of domain architecture, PA spans 365-460; that stretch reads MYPLTSGSLA…YVFFEDGTKI (96 aa). The active-site Charge relay system is Ser543. N-linked (GlcNAc...) asparagine glycosylation is found at Asn624, Asn638, and Asn668.

It belongs to the peptidase S8 family. Post-translationally, the C-terminal propeptide is autocleaved.

The protein localises to the secreted. The polypeptide is Subtilisin-like protease SBT4.15 (Arabidopsis thaliana (Mouse-ear cress)).